Consider the following 651-residue polypeptide: MSSVVHVTLPDGSVREYPQGITIAEAVAQIGPRLAKAALAAKVDGRLVDLSARLEKDCTLQVLTFKDEEGREVFRHTSTHIMAQAVKRLFPEAKLTVGPPLENSFYYDFDLPRPLTPEDLEKIEAEMAKIVEADYPIVRQEVDREEAKRFFAERGEDYKVLLVDKIPEDEVVSIYTQGEFTDLCVGPHLPSTGRVKAFKLLSVAGAYWEGNQANKQLQRVYGTSFESKKDLEDYLFRLEEARRRDHRRLGPELGLYRFEEVAPGFAFWLDKGYRLYRELENWSRKLQEARGYEEVSTPWIVSSKLYETSGHWQHYRQNMFEIRAEDQDFATKPMNCPCHCVLYKSQIRSYRDLPLKIAEYGPLSRFEASGTLHGLLRVRGFHQDDAHLFVRPDQIEEQIREVIGLVDTIYGTLGLEYEIKLSTRPEDFMGDIELWNEAEAALARALDGMGRSYKLNPGDGAFYGPKLDFDVTDALGRKWQCATVQLDFQLPIKFDLTYIGEDGKEHRPVMIHRAIMGTLERFIGILTEHYAGNFPLWMAPVQARVLPITDRHHAYAGEVVAKLQEAGLRVEGDYRNEKVGYKIREAELLKIPFILVVGDKEAEAGAVAVRRRGMKDLGPMPLADFLALAQSEIASKAMDEACRKAASGTRD.

The 64-residue stretch at 1–64 (MSSVVHVTLP…EKDCTLQVLT (64 aa)) folds into the TGS domain. The tract at residues 245–535 (DHRRLGPELG…LTEHYAGNFP (291 aa)) is catalytic. The Zn(2+) site is built by cysteine 336, histidine 387, and histidine 512.

This sequence belongs to the class-II aminoacyl-tRNA synthetase family. As to quaternary structure, homodimer. Requires Zn(2+) as cofactor.

Its subcellular location is the cytoplasm. The catalysed reaction is tRNA(Thr) + L-threonine + ATP = L-threonyl-tRNA(Thr) + AMP + diphosphate + H(+). Catalyzes the attachment of threonine to tRNA(Thr) in a two-step reaction: L-threonine is first activated by ATP to form Thr-AMP and then transferred to the acceptor end of tRNA(Thr). Also edits incorrectly charged L-seryl-tRNA(Thr). The polypeptide is Threonine--tRNA ligase (Symbiobacterium thermophilum (strain DSM 24528 / JCM 14929 / IAM 14863 / T)).